The chain runs to 492 residues: Transmembrane protein 39B (492 aa).

The segment at 1–53 (MGGRRGPNRTSYYRNPLCEPGSSGASGGGHSSSASVSSVRSRSRTTSGTGLSS) is disordered. N8 carries N-linked (GlcNAc...) asparagine glycosylation. The segment covering 31 to 53 (SSSASVSSVRSRSRTTSGTGLSS) has biased composition (low complexity). A run of 8 helical transmembrane segments spans residues 77–97 (SILFELQLFFCQLIALFVHYI), 115–135 (TSLNFHLIDFNLLMVTAIVLG), 153–175 (SLFRSILLFLTRFTVLTATGWSL), 185–205 (TYSFLNLLFLCYPFGMYIPFL), 288–308 (EVLVSSMLSAYYVAFVPVWFV), 322–342 (LFLLVSISTSVILMQHLLPAS), 421–441 (ILNILLLLEGAVIVYQLYSLM), and 447–467 (HQTISLALILFSNYYAFFKLL).

Belongs to the TMEM39 family.

It is found in the endoplasmic reticulum membrane. Its function is as follows. May protect the cells against DNA damage caused by exposure to the cold-warming stress and facilitates tissue damage repair during the recovery phase. This is Transmembrane protein 39B from Mus musculus (Mouse).